The following is a 452-amino-acid chain: tRNA modification GTPase MnmE (452 aa).

Arg-22, Glu-80, and Lys-119 together coordinate (6S)-5-formyl-5,6,7,8-tetrahydrofolate. The 163-residue stretch at 213 to 375 (GVRTVIVGKP…LENKIYEKFF (163 aa)) folds into the TrmE-type G domain. Position 223 (Asn-223) interacts with K(+). Residues 223 to 228 (NSGKST), 242 to 248 (TDIPGTT), and 267 to 270 (DTAG) each bind GTP. A Mg(2+)-binding site is contributed by Ser-227. K(+) is bound by residues Thr-242, Ile-244, and Thr-247. Thr-248 contributes to the Mg(2+) binding site. Lys-452 serves as a coordination point for (6S)-5-formyl-5,6,7,8-tetrahydrofolate.

This sequence belongs to the TRAFAC class TrmE-Era-EngA-EngB-Septin-like GTPase superfamily. TrmE GTPase family. Homodimer. Heterotetramer of two MnmE and two MnmG subunits. The cofactor is K(+).

It is found in the cytoplasm. Its function is as follows. Exhibits a very high intrinsic GTPase hydrolysis rate. Involved in the addition of a carboxymethylaminomethyl (cmnm) group at the wobble position (U34) of certain tRNAs, forming tRNA-cmnm(5)s(2)U34. The chain is tRNA modification GTPase MnmE from Petrotoga mobilis (strain DSM 10674 / SJ95).